The sequence spans 275 residues: Large ribosomal subunit protein uL2 (275 aa).

Disordered stretches follow at residues 222–243 (GSVM…PIGR) and 256–275 (GGKT…KRKP).

This sequence belongs to the universal ribosomal protein uL2 family. As to quaternary structure, part of the 50S ribosomal subunit. Forms a bridge to the 30S subunit in the 70S ribosome.

Functionally, one of the primary rRNA binding proteins. Required for association of the 30S and 50S subunits to form the 70S ribosome, for tRNA binding and peptide bond formation. It has been suggested to have peptidyltransferase activity; this is somewhat controversial. Makes several contacts with the 16S rRNA in the 70S ribosome. The polypeptide is Large ribosomal subunit protein uL2 (Syntrophomonas wolfei subsp. wolfei (strain DSM 2245B / Goettingen)).